The primary structure comprises 56 residues: MPERIVKPMPQDPVTKPGDEGPRTPNVPKPDTERLLERMRRVDPRQAQRYRQRSGE.

Residues M1–E56 form a disordered region. The segment covering P30–Q46 has biased composition (basic and acidic residues). An Isoglutamyl lysine isopeptide (Glu-Lys) (interchain with K-? in acceptor proteins) cross-link involves residue E56.

The protein belongs to the ubiquitin-like protein UBact family.

In terms of biological role, may function as a protein modifier covalently attached to lysine residues of substrate proteins. This may serve to target the modified proteins for degradation by proteasomes. The chain is Prokaryotic ubiquitin-like protein UBact from Acetithermum autotrophicum.